A 198-amino-acid polypeptide reads, in one-letter code: HTH-type transcriptional repressor DhaR (198 aa).

The HTH tetR-type domain occupies threonine 4–leucine 64.

Functionally, transcriptional repressor for the dhaA haloalkane dehalogenase gene. This Mycobacterium sp. (strain GP1) protein is HTH-type transcriptional repressor DhaR (dhaR).